The following is a 483-amino-acid chain: PAT complex subunit CCDC47 (483 aa).

An N-terminal signal peptide occupies residues 1 to 20; that stretch reads MKAFHTFCVVLLVFGSVSEA. At 21 to 135 the chain is on the cytoplasmic side; the sequence is KFDDFEDEED…PAHLQNSWES (115 aa). The disordered stretch occupies residues 46–118; that stretch reads MEDSVTESPQ…PDTSSSKNKD (73 aa). Residues 60–104 are compositionally biased toward acidic residues; it reads TEDDEDETTVELEGQDENQEGDFEDADTQEGDTESEPYDDEEFEG. A compositionally biased stretch (basic and acidic residues) spans 105–118; sequence YEDKPDTSSSKNKD. Residues 136-155 traverse the membrane as a helical segment; the sequence is YYLEILMVTGLLAYIMNYII. Residues 156-483 lie on the Lumenal side of the membrane; that stretch reads GKNKNSRLAQ…KMKQIKVKAM (328 aa). A glycan (N-linked (GlcNAc...) asparagine) is linked at N178. Positions 424-483 are disordered; it reads QRQEAAQSRREEKKRAEKERIMNEEDPEKQRRLEEAALRREQKKLEKKQMKMKQIKVKAM. Residues 430–472 show a composition bias toward basic and acidic residues; sequence QSRREEKKRAEKERIMNEEDPEKQRRLEEAALRREQKKLEKKQ. A coiled-coil region spans residues 450–483; the sequence is PEKQRRLEEAALRREQKKLEKKQMKMKQIKVKAM. The span at 473-483 shows a compositional bias: basic residues; it reads MKMKQIKVKAM.

The protein belongs to the CCDC47 family. In terms of assembly, component of the PAT complex, composed of WDR83OS/Asterix and CCDC47. The PAT complex is part of the multi-pass translocon (MPT) complex, composed of three subcomplexes, the GEL complex (composed of RAB5IF/OPTI and TMCO1), the BOS complex (composed of NCLN/Nicalin, NOMO and TMEM147) and the PAT complex (composed of WDR83OS/Asterix and CCDC47). The MPT complex associates with the SEC61 complex. Interacts with VCP, HSPA5, DERL1, DERL2 and SELENOS.

It is found in the endoplasmic reticulum membrane. Its subcellular location is the rough endoplasmic reticulum membrane. In terms of biological role, component of the multi-pass translocon (MPT) complex that mediates insertion of multi-pass membrane proteins into the lipid bilayer of membranes. The MPT complex takes over after the SEC61 complex: following membrane insertion of the first few transmembrane segments of proteins by the SEC61 complex, the MPT complex occludes the lateral gate of the SEC61 complex to promote insertion of subsequent transmembrane regions. Within the MPT complex, the PAT subcomplex sequesters any highly polar regions in the transmembrane domains away from the non-polar membrane environment until they can be buried in the interior of the fully assembled protein. Within the PAT subcomplex, CCDC47 occludes the lateral gate of the SEC61 complex. Involved in the regulation of calcium ion homeostasis in the ER. Required for proper protein degradation via the ERAD (ER-associated degradation) pathway. Has an essential role in the maintenance of ER organization during embryogenesis. This is PAT complex subunit CCDC47 from Homo sapiens (Human).